The sequence spans 147 residues: Acidic phospholipase A2 S9-53F (147 aa).

The first 19 residues, 1-19 (MYPAHLLVLLAVCVSLLGA), serve as a signal peptide directing secretion. A propeptide spanning residues 20–27 (SDIPPQPL) is cleaved from the precursor. 7 disulfides stabilise this stretch: Cys-38–Cys-99, Cys-54–Cys-146, Cys-56–Cys-72, Cys-71–Cys-127, Cys-78–Cys-120, Cys-88–Cys-113, and Cys-106–Cys-118. Ca(2+) is bound by residues Tyr-55, Gly-57, and Gly-59. The active site involves His-75. Residue Asp-76 participates in Ca(2+) binding. Asp-121 is an active-site residue.

The protein belongs to the phospholipase A2 family. Group I subfamily. D49 sub-subfamily. The cofactor is Ca(2+). As to expression, expressed by the venom gland.

Its subcellular location is the secreted. The catalysed reaction is a 1,2-diacyl-sn-glycero-3-phosphocholine + H2O = a 1-acyl-sn-glycero-3-phosphocholine + a fatty acid + H(+). Functionally, snake venom phospholipase A2 (PLA2) that inhibits collagen-induced platelet aggregation. PLA2 catalyzes the calcium-dependent hydrolysis of the 2-acyl groups in 3-sn-phosphoglycerides. This is Acidic phospholipase A2 S9-53F from Austrelaps superbus (Lowland copperhead snake).